The sequence spans 460 residues: Glycine--tRNA ligase (460 aa).

Substrate contacts are provided by Arg98 and Glu172. ATP contacts are provided by residues 204-206, 214-219, 288-289, and 332-335; these read RNE, FRTREF, EL, and GADR. 219 to 223 lines the substrate pocket; that stretch reads FEQME. 328–332 serves as a coordination point for substrate; that stretch reads EPSLG.

The protein belongs to the class-II aminoacyl-tRNA synthetase family. Homodimer.

It localises to the cytoplasm. The enzyme catalyses tRNA(Gly) + glycine + ATP = glycyl-tRNA(Gly) + AMP + diphosphate. Its function is as follows. Catalyzes the attachment of glycine to tRNA(Gly). This chain is Glycine--tRNA ligase, found in Geobacillus kaustophilus (strain HTA426).